The sequence spans 345 residues: S-adenosylmethionine:tRNA ribosyltransferase-isomerase (345 aa).

The protein belongs to the QueA family. In terms of assembly, monomer.

The protein localises to the cytoplasm. It carries out the reaction 7-aminomethyl-7-carbaguanosine(34) in tRNA + S-adenosyl-L-methionine = epoxyqueuosine(34) in tRNA + adenine + L-methionine + 2 H(+). It participates in tRNA modification; tRNA-queuosine biosynthesis. Functionally, transfers and isomerizes the ribose moiety from AdoMet to the 7-aminomethyl group of 7-deazaguanine (preQ1-tRNA) to give epoxyqueuosine (oQ-tRNA). This chain is S-adenosylmethionine:tRNA ribosyltransferase-isomerase, found in Helicobacter pylori (strain J99 / ATCC 700824) (Campylobacter pylori J99).